We begin with the raw amino-acid sequence, 194 residues long: Protein GrpE (194 aa).

2 stretches are compositionally biased toward basic and acidic residues: residues 1–19 and 26–44; these read MSKE…ENTS and KKEA…NQKL. A disordered region spans residues 1–44; the sequence is MSKEEFPSEKNLDKEENTSKPKKAVKKEAAKGEETKKNNENQKL.

Belongs to the GrpE family. As to quaternary structure, homodimer.

Its subcellular location is the cytoplasm. Functionally, participates actively in the response to hyperosmotic and heat shock by preventing the aggregation of stress-denatured proteins, in association with DnaK and GrpE. It is the nucleotide exchange factor for DnaK and may function as a thermosensor. Unfolded proteins bind initially to DnaJ; upon interaction with the DnaJ-bound protein, DnaK hydrolyzes its bound ATP, resulting in the formation of a stable complex. GrpE releases ADP from DnaK; ATP binding to DnaK triggers the release of the substrate protein, thus completing the reaction cycle. Several rounds of ATP-dependent interactions between DnaJ, DnaK and GrpE are required for fully efficient folding. The protein is Protein GrpE of Lactobacillus acidophilus (strain ATCC 700396 / NCK56 / N2 / NCFM).